The primary structure comprises 148 residues: Lysozyme C-1 (148 aa).

The first 18 residues, 1–18, serve as a signal peptide directing secretion; it reads MKALLVLGFLLLSASVQA. The C-type lysozyme domain maps to 19-148; that stretch reads KIYERCQFAR…LSGYIRNCGV (130 aa). Intrachain disulfides connect Cys-24–Cys-146, Cys-48–Cys-134, Cys-83–Cys-99, and Cys-95–Cys-113. Active-site residues include Glu-53 and Asp-71.

The protein belongs to the glycosyl hydrolase 22 family. In terms of assembly, monomer. Expressed in lung, small intestine and spleen.

The protein localises to the secreted. The catalysed reaction is Hydrolysis of (1-&gt;4)-beta-linkages between N-acetylmuramic acid and N-acetyl-D-glucosamine residues in a peptidoglycan and between N-acetyl-D-glucosamine residues in chitodextrins.. In terms of biological role, lysozymes have primarily a bacteriolytic function; those in tissues and body fluids are associated with the monocyte-macrophage system and enhance the activity of immunoagents. In the intestine they may also have a digestive function. The chain is Lysozyme C-1 (Lyz1) from Rattus norvegicus (Rat).